A 537-amino-acid polypeptide reads, in one-letter code: Cytochrome P450 monooxygenase AOL_s00215g282 (537 aa).

The chain crosses the membrane as a helical span at residues 9 to 29 (ATVVLCGSIVTVSIAYVIFVV). Asn-126 carries N-linked (GlcNAc...) asparagine glycosylation. Cys-451 contacts heme.

This sequence belongs to the cytochrome P450 family. Heme is required as a cofactor.

It is found in the membrane. It participates in secondary metabolite biosynthesis; terpenoid biosynthesis. In terms of biological role, cytochrome P450 monooxygenase; part of the gene cluster that mediates the biosynthesis of sesquiterpenyl epoxy-cyclohexenoids (SECs) such as anthrobotrisins and arthrosporols, metabolites that possess a novel hybrid carbon skeleton consisting of a polyketide-derived epoxycyclohexenol combined with a terpenoid-derived monocyclic sesquiterpenol substructure (PKS-PTS hybrid). The SEC pathway plays an important role for fungal soil colonization via decreasing fungal nematode-capturing ability. Within the pathway, the cytochrome P450 monooxygenase AOL_s00215g282 acts as a m-cresol hydrolase that converts m-cresol to toluquinol. The pathway begins with the biosynthesis of 6-methylsalicylic acid (6-MSA), the first precursor of the polyketide-derived epoxycyclohexenol in arthrosporols, by the polyketide synthase (PKS) AOL_s00215g283 via condensation of 1 acetate and 3 malonate units. The 6-methylsalicylic acid decarboxylase AOL_s00215g281 then catalyzes the decarboxylation of 6-methylsalicylic acid to yield m-cresol. The cytochrome P450 monooxygenase AOL_s00215g282 further oxidizes m-cresol to yield toluquinol. With the assistance of the oxidoreductase AOL_s00215g277, the polyprenyl transferase AOL_s00215g276 catalyzes the farnesylation of toluquinol to produce farnesyl hydroquinone, the hybrid precursor for biosynthesis of SECs. Farnesyl hydroquinone undergoes epoxidation and then subsequent dehydrogenation to form farnesyl epoxy-quinone, the first and simplest SEC. The cytochrome P450 monooxygenase AOL_s00215g278 and the FAD-dependent monooxygenase AOL_s00215g279 might be involved in the oxygenation of the phenol moiety, most likely in the epoxy formation. The cytochrome P450 monooxygenases AOL_s00215g274 and AOL_s00215g280 are involved in specific regional ketone reductions at respectively C-4 and C-1 of farnesyl epoxy-quinone PubMed:33823587. This Arthrobotrys oligospora (strain ATCC 24927 / CBS 115.81 / DSM 1491) (Nematode-trapping fungus) protein is Cytochrome P450 monooxygenase AOL_s00215g282.